Here is a 485-residue protein sequence, read N- to C-terminus: 28S rRNA (uridine-N(3))-methyltransferase (485 aa).

S-adenosyl-L-methionine is bound by residues Arg-296, Gly-318, and Asn-347.

Belongs to the class IV-like SAM-binding methyltransferase superfamily.

The protein resides in the nucleus. The catalysed reaction is uridine in 28S rRNA + S-adenosyl-L-methionine = N(3)-methyluridine in 28S rRNA + S-adenosyl-L-homocysteine + H(+). Functionally, S-adenosyl-L-methionine-dependent methyltransferase that specifically methylates the uridine in position 3485 of 28S rRNA. The protein is 28S rRNA (uridine-N(3))-methyltransferase of Drosophila melanogaster (Fruit fly).